A 307-amino-acid chain; its full sequence is Probable porphobilinogen deaminase (307 aa).

At C240 the chain carries S-(dipyrrolylmethanemethyl)cysteine.

It belongs to the HMBS family. Requires dipyrromethane as cofactor.

The enzyme catalyses 4 porphobilinogen + H2O = hydroxymethylbilane + 4 NH4(+). Its pathway is porphyrin-containing compound metabolism; protoporphyrin-IX biosynthesis; coproporphyrinogen-III from 5-aminolevulinate: step 2/4. Its function is as follows. Tetrapolymerization of the monopyrrole PBG into the hydroxymethylbilane pre-uroporphyrinogen in several discrete steps. The sequence is that of Probable porphobilinogen deaminase (hemC) from Aeropyrum pernix (strain ATCC 700893 / DSM 11879 / JCM 9820 / NBRC 100138 / K1).